Reading from the N-terminus, the 416-residue chain is Tyrosine--tRNA ligase (416 aa).

Tyrosine 41 lines the L-tyrosine pocket. A 'HIGH' region motif is present at residues 46–55 (ATASSLHAGH). Residues tyrosine 175 and glutamine 179 each coordinate L-tyrosine. The 'KMSKS' region motif lies at 235–239 (KMGKT). Residue lysine 238 coordinates ATP. The S4 RNA-binding domain occupies 349-416 (LPVAKAFVDA…KKKHVLLKPV (68 aa)).

This sequence belongs to the class-I aminoacyl-tRNA synthetase family. TyrS type 1 subfamily. In terms of assembly, homodimer.

It is found in the cytoplasm. The enzyme catalyses tRNA(Tyr) + L-tyrosine + ATP = L-tyrosyl-tRNA(Tyr) + AMP + diphosphate + H(+). Functionally, catalyzes the attachment of tyrosine to tRNA(Tyr) in a two-step reaction: tyrosine is first activated by ATP to form Tyr-AMP and then transferred to the acceptor end of tRNA(Tyr). The polypeptide is Tyrosine--tRNA ligase (Xanthobacter autotrophicus (strain ATCC BAA-1158 / Py2)).